A 345-amino-acid polypeptide reads, in one-letter code: Heat-inducible transcription repressor HrcA (345 aa).

Belongs to the HrcA family.

In terms of biological role, negative regulator of class I heat shock genes (grpE-dnaK-dnaJ and groELS operons). Prevents heat-shock induction of these operons. This Dehalococcoides mccartyi (strain ATCC BAA-2266 / KCTC 15142 / 195) (Dehalococcoides ethenogenes (strain 195)) protein is Heat-inducible transcription repressor HrcA.